The following is a 192-amino-acid chain: Orotate phosphoribosyltransferase (192 aa).

A 5-phospho-alpha-D-ribose 1-diphosphate-binding site is contributed by E116–S124. Orotate-binding residues include T120 and R148.

It belongs to the purine/pyrimidine phosphoribosyltransferase family. PyrE subfamily. In terms of assembly, homodimer. The cofactor is Mg(2+).

It catalyses the reaction orotidine 5'-phosphate + diphosphate = orotate + 5-phospho-alpha-D-ribose 1-diphosphate. The protein operates within pyrimidine metabolism; UMP biosynthesis via de novo pathway; UMP from orotate: step 1/2. Functionally, catalyzes the transfer of a ribosyl phosphate group from 5-phosphoribose 1-diphosphate to orotate, leading to the formation of orotidine monophosphate (OMP). The polypeptide is Orotate phosphoribosyltransferase (Bartonella quintana (strain Toulouse) (Rochalimaea quintana)).